The sequence spans 207 residues: Serotonin N-acetyltransferase (207 aa).

Residues 1–29 (MSTPSVHCLKPSPLHLPSGIPGSPGRQRR) form a disordered region. The interval 28 to 35 (RRHTLPAN) is YWHAZ-binding. At Thr31 the chain carries Phosphothreonine; by PKA. Residues 35–196 (NEFRCLTPED…TFTEMHCSLR (162 aa)) form the N-acetyltransferase domain. Residue Leu124 coordinates substrate. Residues 124-126 (LAV) and 132-137 (QQGKGS) contribute to the acetyl-CoA site. Residue Met159 coordinates substrate. 168 to 170 (YQR) contributes to the acetyl-CoA binding site. Ser205 is modified (phosphoserine; by PKA).

Belongs to the acetyltransferase family. AANAT subfamily. Monomer. Interacts with several 14-3-3 proteins, including YWHAB, YWHAE, YWHAG and YWHAZ, preferentially when phosphorylated at Thr-31. Phosphorylation on Ser-205 also allows binding to YWHAZ, but with a 10-fold lower affinity. The interaction with YWHAZ considerably increases affinity for arylalkylamines and acetyl-CoA and protects the enzyme from dephosphorylation and proteasomal degradation. It may also prevent thiol-dependent inactivation. The physiological stoichiometry of the interaction is not clear. In vitro studies show either 1:2 (i.e. 1 AANAT molecule per YWHAZ dimer) or 2:2. Post-translationally, cAMP-dependent phosphorylation on both N-terminal Thr-31 and C-terminal Ser-205 regulates AANAT activity by promoting interaction with 14-3-3 proteins. Highest expression in the pineal gland, followed by retina. Expressed at much lower levels in brainstem and pituitary gland. AANAT activity also detected at low levels in the olfactory lobe.

The protein resides in the cytoplasm. It carries out the reaction a 2-arylethylamine + acetyl-CoA = an N-acetyl-2-arylethylamine + CoA + H(+). The protein operates within aromatic compound metabolism; melatonin biosynthesis; melatonin from serotonin: step 1/2. Its function is as follows. Controls the night/day rhythm of melatonin production in the pineal gland. Catalyzes the N-acetylation of serotonin into N-acetylserotonin, the penultimate step in the synthesis of melatonin. In Ovis aries (Sheep), this protein is Serotonin N-acetyltransferase (AANAT).